Consider the following 132-residue polypeptide: ATP synthase epsilon chain (132 aa).

It belongs to the ATPase epsilon chain family. In terms of assembly, F-type ATPases have 2 components, CF(1) - the catalytic core - and CF(0) - the membrane proton channel. CF(1) has five subunits: alpha(3), beta(3), gamma(1), delta(1), epsilon(1). CF(0) has three main subunits: a, b and c.

The protein localises to the cell membrane. Produces ATP from ADP in the presence of a proton gradient across the membrane. In Brevibacillus brevis (strain 47 / JCM 6285 / NBRC 100599), this protein is ATP synthase epsilon chain.